The chain runs to 60 residues: Large ribosomal subunit protein uL30 (60 aa).

It belongs to the universal ribosomal protein uL30 family. In terms of assembly, part of the 50S ribosomal subunit.

In Streptococcus equi subsp. equi (strain 4047), this protein is Large ribosomal subunit protein uL30.